Consider the following 455-residue polypeptide: Venom prothrombin activator notecarin-D1 (455 aa).

The signal sequence occupies residues 1–20 (MAPQLLLCLILTFLWSLPEA). The propeptide occupies 21 to 40 (ESNVFLKSKVANRFLQRTKR). Residues 41 to 86 (SNSLFEEIRPGNIERECIEEKCSKEEAREVFEDNEKTETFWNVYVD) enclose the Gla domain. Glu-46, Glu-47, Glu-54, Glu-56, Glu-59, Glu-60, Glu-65, Glu-66, Glu-69, Glu-72, and Glu-75 each carry 4-carboxyglutamate. A disulfide bridge links Cys-57 with Cys-62. Positions 86–122 (DGDQCSSNPCHYRGTCKDGIGSYTCTCLPNYEGKNCE) constitute an EGF-like 1; calcium-binding domain. Cystine bridges form between Cys-90–Cys-101, Cys-95–Cys-110, Cys-112–Cys-121, Cys-129–Cys-140, Cys-136–Cys-149, Cys-151–Cys-164, Cys-172–Cys-328, Cys-216–Cys-221, Cys-236–Cys-252, Cys-376–Cys-390, and Cys-401–Cys-429. A glycan (O-linked (Hex...) serine) is linked at Ser-92. Residues 129–164 (CRVDNGNCWHFCKRVQSETQCSCAESYRLGVDGHSC) enclose the EGF-like 2 domain. Positions 182-209 (REASLPDFVQSQKATLLKKSDNPSPDIR) are cleaved as a propeptide — activation peptide. Positions 210–453 (IVNGMDCKLG…FIPWIKKIMS (244 aa)) constitute a Peptidase S1 domain. His-251 functions as the Charge relay system in the catalytic mechanism. Asn-254 carries N-linked (GlcNAc...) asparagine glycosylation. The active-site Charge relay system is Asp-308. Ser-405 acts as the Charge relay system in catalysis.

It belongs to the peptidase S1 family. Snake venom subfamily. In terms of assembly, heterodimer of a light chain and a heavy chain; disulfide-linked. In terms of processing, gamma-carboxyglutamate residues are formed by vitamin K dependent carboxylation. These residues are essential for the binding of calcium. Expressed by the venom gland.

It localises to the secreted. The enzyme catalyses Selective cleavage of Arg-|-Thr and then Arg-|-Ile bonds in prothrombin to form thrombin.. In terms of biological role, snake prothrombin activator that attacks the hemostatic system of prey. This protein is functionally similar to blood coagulation factor Xa. The polypeptide is Venom prothrombin activator notecarin-D1 (Notechis scutatus scutatus (Mainland tiger snake)).